The primary structure comprises 412 residues: NF-kappa-B essential modulator (412 aa).

The segment at 1 to 48 is disordered; sequence MNKHPWKNQLSEMVQPSGGPAEDQDMLGEESSLGKPAMLHLPSEQGTP. A required for interaction with and ubiquitination by MARCHF2 region spans residues 1 to 197; it reads MNKHPWKNQL…REVLQQQHSV (197 aa). Phosphoserine; by IKKB occurs at positions 31 and 43. Residues 44-111 are interaction with CHUK/IKBKB; that stretch reads EQGTPETLQR…KLVERLSLEK (68 aa). The stretch at 49 to 345 forms a coiled coil; sequence ETLQRCLEEN…LKVGCHESAR (297 aa). Serine 68 bears the Phosphoserine mark. A Phosphoserine; by ATM modification is found at serine 85. Residues lysine 111, lysine 139, lysine 143, lysine 226, and lysine 246 each participate in a glycyl lysine isopeptide (Lys-Gly) (interchain with G-Cter in ubiquitin) cross-link. The interval 150–250 is interaction with TANK; it reads LGELQESQSR…YDSHIKSSKG (101 aa). A ubiquitin-binding (UBAN) region spans residues 242–343; sequence DSHIKSSKGM…NKLKVGCHES (102 aa). A self-association region spans residues 246–358; it reads KSSKGMQLED…MRKRHVETPQ (113 aa). Residues 249–412 form a required for interaction with TNFAIP3 region; that stretch reads KGMQLEDLRQ…LQIHVMECIE (164 aa). The tract at residues 250–339 is linear polyubiquitin-binding, does not bind to 'Lys-63'-linked polyubiquitin; the sequence is GMQLEDLRQQ…QREFNKLKVG (90 aa). A Glycyl lysine isopeptide (Lys-Gly) (interchain with G-Cter in SUMO); alternate cross-link involves residue lysine 270. Residue lysine 270 forms a Glycyl lysine isopeptide (Lys-Gly) (interchain with G-Cter in ubiquitin); alternate linkage. Residues lysine 276, lysine 278, lysine 285, and lysine 295 each participate in a glycyl lysine isopeptide (Lys-Gly) (interchain with G-Cter in ubiquitin) cross-link. A Glycyl lysine isopeptide (Lys-Gly) (interchain with G-Cter in SUMO); alternate cross-link involves residue lysine 302. Lysine 302 participates in a covalent cross-link: Glycyl lysine isopeptide (Lys-Gly) (interchain with G-Cter in ubiquitin); alternate. Glycyl lysine isopeptide (Lys-Gly) (interchain with G-Cter in ubiquitin) cross-links involve residues lysine 314, lysine 318, and lysine 319. Residues 315–336 are leucine-zipper; sequence LVEKKEYLQEQLEQLQREFNKL. Position 369 is a phosphoserine; by IKKB (serine 369). The segment at 375-412 is interaction with CYLD; that stretch reads SNQRRSPPEEPPDFCCPKCQYQAPDMDTLQIHVMECIE. A Phosphoserine modification is found at serine 380. The CCHC NOA-type zinc finger occupies 382-412; sequence PEEPPDFCCPKCQYQAPDMDTLQIHVMECIE. A Zn(2+)-binding site is contributed by cysteine 390. Lysine 392 participates in a covalent cross-link: Glycyl lysine isopeptide (Lys-Gly) (interchain with G-Cter in ubiquitin). Cysteine 393, histidine 406, and cysteine 410 together coordinate Zn(2+).

As to quaternary structure, homodimer; disulfide-linked. Component of the I-kappa-B-kinase (IKK) core complex consisting of CHUK, IKBKB and IKBKG; probably four alpha/CHUK-beta/IKBKB dimers are associated with four gamma/IKBKG subunits. The IKK core complex seems to associate with regulatory or adapter proteins to form a IKK-signalosome holo-complex. The IKK complex associates with TERF2IP/RAP1, leading to promote IKK-mediated phosphorylation of RELA/p65. Part of a complex composed of NCOA2, NCOA3, CHUK/IKKA, IKBKB, IKBKG and CREBBP. Interacts with COPS3, CYLD, NALP2, TRPC4AP and PIDD1. Interacts with ATM; the complex is exported from the nucleus. Interacts with TRAF6. Interacts with IKBKE. Interacts with TANK; the interaction is enhanced by IKBKE and TBK1. Part of a ternary complex consisting of TANK, IKBKB and IKBKG. Interacts with ZFAND5. Interacts with RIPK2. Interacts with TNIP1 and TNFAIP3; TNIP1 facilitates the TNFAIP3-mediated de-ubiquitination of IKBKG. Interacts with TNFAIP3; the interaction is induced by TNF stimulation and by polyubiquitin. Binds (via UBAN region) polyubiquitin; binds both 'Lys-63'-linked and linear polyubiquitin, with higher affinity for linear ubiquitin. Interacts with NLRP10. Interacts with TANK; this interaction increases in response to DNA damage. Interacts with USP10; this interaction increases in response to DNA damage. Interacts with ZC3H12A; this interaction increases in response to DNA damage. Interacts with IFIT5; the interaction synergizes the recruitment of IKK to MAP3K7 and enhances IKK phosphorylation. Interacts with TRIM29; this interaction induces IKBKG/NEMO ubiquitination and proteolytic degradation. Interacts with TRIM13; this interaction leads to IKBKG/NEMO ubiquitination. Interacts with ARFIP2. Interacts with RIPK1. Interacts with (ubiquitinated) BCL10; interaction with polyubiquitinated BCL10 via both 'Lys-63'-linked and linear ubiquitin is required for TCR-induced NF-kappa-B activation. Interacts with MARCHF2; during the late stages of macrophage viral and bacterial infection; the interaction leads to ubiquitination and degradation of IKBKG/NEMO. In terms of processing, phosphorylation at Ser-68 attenuates aminoterminal homodimerization. Polyubiquitinated on Lys-278 via 'Lys-63'-linked ubiquitin; the ubiquitination is mediated downstream of NOD2 and RIPK2 and probably plays a role in signaling by facilitating interactions with ubiquitin domain-containing proteins and activates the NF-kappa-B pathway. Polyubiquitinated on Lys-278 and Lys-302 through 'Lys-63'-linked ubiquitin; the ubiquitination is mediated by BCL10, MALT1 and TRAF6 and probably plays a role in signaling by facilitating interactions with ubiquitin domain-containing proteins and activates the NF-kappa-B pathway. Monoubiquitinated on Lys-270 and Lys-302; promotes nuclear export. Polyubiquitinated through 'Lys-27' by TRIM23; involved in antiviral innate and inflammatory responses. Linear polyubiquitinated on Lys-111, Lys-143, Lys-226, Lys-246, Lys-270, Lys-278, Lys-285, Lys-295, Lys-302 and Lys-319; the head-to-tail polyubiquitination is mediated by the LUBAC complex and plays a key role in NF-kappa-B activation. Deubiquitinated by USP10 in a TANK-dependent and -independent manner, leading to the negative regulation of NF-kappa-B signaling upon DNA damage. Ubiquitinated at Lys-319 by MARCHF2 following bacterial and viral infection which leads to its degradation. Polyubiquitinated via 'Lys-29'-linked ubiquitin; leading to lysosomal degradation. Post-translationally, sumoylated on Lys-270 and Lys-302 with SUMO1; the modification results in phosphorylation of Ser-85 by ATM leading to a replacement of the sumoylation by mono-ubiquitination on these residues. In terms of processing, neddylated by TRIM40, resulting in stabilization of NFKBIA and down-regulation of NF-kappa-B activity.

The protein localises to the cytoplasm. It localises to the nucleus. Functionally, regulatory subunit of the IKK core complex which phosphorylates inhibitors of NF-kappa-B thus leading to the dissociation of the inhibitor/NF-kappa-B complex and ultimately the degradation of the inhibitor. Its binding to scaffolding polyubiquitin plays a key role in IKK activation by multiple signaling receptor pathways. Can recognize and bind both 'Lys-63'-linked and linear polyubiquitin upon cell stimulation, with a much highr affinity for linear polyubiquitin. Could be implicated in NF-kappa-B-mediated protection from cytokine toxicity. Essential for viral activation of IRF3. Involved in TLR3- and IFIH1-mediated antiviral innate response; this function requires 'Lys-27'-linked polyubiquitination. The chain is NF-kappa-B essential modulator (Ikbkg) from Mus musculus (Mouse).